The sequence spans 182 residues: Peptidoglycan recognition protein 1 (182 aa).

Positions Met1–Ser18 are cleaved as a signal peptide. 3 disulfides stabilise this stretch: Cys17/Cys141, Cys33/Cys78, and Cys54/Cys60. An N-acetylmuramoyl-L-alanine amidase domain is found at His39–Gly167.

It belongs to the N-acetylmuramoyl-L-alanine amidase 2 family. In terms of assembly, homodimer; disulfide-linked. Interacts with HSPA1A; this interaction forms a cytotoxic complex that is released by lymphokine-activated killer cells. Interacts with HSPBP1; this interaction blocks the cytotoxic activity of the PGLYRP1-HSPA1A complex. As to expression, strongly expressed in spleen and lung. Also detected in brain and thymus. In the lung, expressed in the intraalveolar space, in the brain, expressed in the Purkinje cells of the cerebellum and in certain layers of neurons in the hippocampus. Also detected in cells filling the space within the intestinal villus.

The protein resides in the cytoplasm. It is found in the secreted. Its function is as follows. Innate immunity protein that plays several important functions in antimicrobial and antitumor defense systems. Acts as a pattern receptor that binds to murein peptidoglycans (PGN) of Gram-positive bacteria and thus provides bactericidal activity. Forms an equimolar complex with heat shock protein HSPA1A and induces programmed cell death through apoptosis and necroptosis in tumor cell lines by activating the TNFR1 receptor on the target cell membrane. In addition, acts in complex with the Ca(2+)-binding protein S100A4 as a chemoattractant able to induce lymphocyte movement. Mechanistically, this complex acts as a ligand of the chemotactic receptors CCR5 and CXCR3 which are present on the cells of the immune system. Also promotes the activation of lymphocytes that become able to kill virus-infected cells as well as tumor cells by modulating the spectrum of their target-cell specificity. Induction of cytotoxicity on monocyte surface requires interaction with TREM1 receptor. The protein is Peptidoglycan recognition protein 1 (Pglyrp1) of Mus musculus (Mouse).